We begin with the raw amino-acid sequence, 927 residues long: Alpha-catenin-like protein hmp-1 (927 aa).

2 coiled-coil regions span residues 319 to 354 (TREN…RRDD) and 672 to 696 (QENQ…QIDI). The interval 901–927 (RNEIETGRDSDDEELDRRHQQRINGRL) is disordered.

This sequence belongs to the vinculin/alpha-catenin family. Component of a core catenin-cadherin complex consisting of hmr-1, hmp-1 and hmp-2; the complex localizes to adherens junctions. May interact with hmp-2. As to expression, epidermal cells.

It localises to the cell junction. The protein resides in the adherens junction. The protein localises to the cytoplasm. Required for cell migration during body enclosure and cell shape changes during body elongation. Required for proper localization of other junctional components, such as pac-1. This Caenorhabditis elegans protein is Alpha-catenin-like protein hmp-1 (hmp-1).